A 172-amino-acid polypeptide reads, in one-letter code: Protein PLASTID REDOX INSENSITIVE 2, chloroplastic (172 aa).

A chloroplast-targeting transit peptide spans 1–54; it reads MAARLWAAAVAPATLNPPLLTLSASSSPSSSRLRRSVLGRLRSRAPRPADFVCR.

It localises to the plastid. Its subcellular location is the chloroplast stroma. The protein resides in the chloroplast nucleoid. In terms of biological role, required for the activity of the plastid-encoded RNA polymerase (PEP) and full expression of genes transcribed by PEP. This Oryza sativa subsp. japonica (Rice) protein is Protein PLASTID REDOX INSENSITIVE 2, chloroplastic.